The sequence spans 489 residues: 3-octaprenyl-4-hydroxybenzoate carboxy-lyase (489 aa).

Asparagine 172 serves as a coordination point for Mn(2+). Residues 175 to 177 (IYR), 189 to 191 (RWL), and 194 to 195 (RG) each bind prenylated FMN. Mn(2+) is bound at residue glutamate 238. Catalysis depends on aspartate 287, which acts as the Proton donor.

It belongs to the UbiD family. Homohexamer. It depends on prenylated FMN as a cofactor. Mn(2+) is required as a cofactor.

It localises to the cell membrane. It carries out the reaction a 4-hydroxy-3-(all-trans-polyprenyl)benzoate + H(+) = a 2-(all-trans-polyprenyl)phenol + CO2. It functions in the pathway cofactor biosynthesis; ubiquinone biosynthesis. In terms of biological role, catalyzes the decarboxylation of 3-octaprenyl-4-hydroxy benzoate to 2-octaprenylphenol, an intermediate step in ubiquinone biosynthesis. In Salmonella paratyphi B (strain ATCC BAA-1250 / SPB7), this protein is 3-octaprenyl-4-hydroxybenzoate carboxy-lyase.